A 400-amino-acid chain; its full sequence is Cysteine desulfurase (400 aa).

Pyridoxal 5'-phosphate contacts are provided by residues 71–72 (GT), asparagine 150, glutamine 178, and 198–200 (SGH). Lysine 201 carries the post-translational modification N6-(pyridoxal phosphate)lysine. Threonine 236 contacts pyridoxal 5'-phosphate. Cysteine 324 acts as the Cysteine persulfide intermediate in catalysis. Position 324 (cysteine 324) interacts with [2Fe-2S] cluster.

Belongs to the class-V pyridoxal-phosphate-dependent aminotransferase family. NifS/IscS subfamily. In terms of assembly, homodimer. Pyridoxal 5'-phosphate serves as cofactor.

The enzyme catalyses (sulfur carrier)-H + L-cysteine = (sulfur carrier)-SH + L-alanine. Catalyzes the removal of elemental sulfur atoms from cysteine to produce alanine. Seems to participate in the biosynthesis of the nitrogenase metalloclusters by providing the inorganic sulfur required for the Fe-S core formation. In Nostoc sp. (strain PCC 7120 / SAG 25.82 / UTEX 2576), this protein is Cysteine desulfurase.